The following is a 490-amino-acid chain: GTPase Der (490 aa).

2 consecutive EngA-type G domains span residues 3–166 and 196–369; these read PVIA…PKDE and IKIA…KSAV. Residues 9-16, 56-60, 118-121, 202-209, 249-253, and 314-317 contribute to the GTP site; these read GRPNVGKS, DTGGI, NKID, DTAGV, and NKWD. A KH-like domain is found at 370 to 454; that stretch reads TRWPTSRLTQ…PIRIEFKGGE (85 aa). A disordered region spans residues 452-490; sequence GGENPYEGNKNTLTDRQVNKKRRMMSHHKKADKKRRDKR. Basic residues predominate over residues 470–490; that stretch reads NKKRRMMSHHKKADKKRRDKR.

This sequence belongs to the TRAFAC class TrmE-Era-EngA-EngB-Septin-like GTPase superfamily. EngA (Der) GTPase family. Associates with the 50S ribosomal subunit.

In terms of biological role, GTPase that plays an essential role in the late steps of ribosome biogenesis. This chain is GTPase Der, found in Pseudomonas savastanoi pv. phaseolicola (strain 1448A / Race 6) (Pseudomonas syringae pv. phaseolicola (strain 1448A / Race 6)).